Consider the following 694-residue polypeptide: Elongation factor G 2 (694 aa).

The tr-type G domain maps to 5-280 (SKYRNIGIFA…AVVDYLPSPT (276 aa)). GTP is bound by residues 14–21 (AHVDAGKT), 78–82 (DTPGH), and 132–135 (NKLD).

Belongs to the TRAFAC class translation factor GTPase superfamily. Classic translation factor GTPase family. EF-G/EF-2 subfamily.

It localises to the cytoplasm. Catalyzes the GTP-dependent ribosomal translocation step during translation elongation. During this step, the ribosome changes from the pre-translocational (PRE) to the post-translocational (POST) state as the newly formed A-site-bound peptidyl-tRNA and P-site-bound deacylated tRNA move to the P and E sites, respectively. Catalyzes the coordinated movement of the two tRNA molecules, the mRNA and conformational changes in the ribosome. This chain is Elongation factor G 2, found in Pseudoalteromonas translucida (strain TAC 125).